The primary structure comprises 287 residues: Thiazole synthase (287 aa).

The active-site Schiff-base intermediate with DXP is the Lys-111. 1-deoxy-D-xylulose 5-phosphate-binding positions include Gly-172, 203–204 (AG), and 225–226 (NT). The tract at residues 268–287 (PQEGVISTRPYGSQADEIGS) is disordered.

The protein belongs to the ThiG family. Homotetramer. Forms heterodimers with either ThiH or ThiS.

The protein localises to the cytoplasm. It carries out the reaction [ThiS sulfur-carrier protein]-C-terminal-Gly-aminoethanethioate + 2-iminoacetate + 1-deoxy-D-xylulose 5-phosphate = [ThiS sulfur-carrier protein]-C-terminal Gly-Gly + 2-[(2R,5Z)-2-carboxy-4-methylthiazol-5(2H)-ylidene]ethyl phosphate + 2 H2O + H(+). It participates in cofactor biosynthesis; thiamine diphosphate biosynthesis. Its function is as follows. Catalyzes the rearrangement of 1-deoxy-D-xylulose 5-phosphate (DXP) to produce the thiazole phosphate moiety of thiamine. Sulfur is provided by the thiocarboxylate moiety of the carrier protein ThiS. In vitro, sulfur can be provided by H(2)S. The sequence is that of Thiazole synthase from Rhodopirellula baltica (strain DSM 10527 / NCIMB 13988 / SH1).